We begin with the raw amino-acid sequence, 146 residues long: uncharacterized protein (146 aa).

An HTH marR-type domain is found at 1–137 (MLSQEFFNSF…TINVMNQIHK (137 aa)).

This is an uncharacterized protein from Staphylococcus aureus (strain MW2).